The chain runs to 265 residues: Thioredoxin-related transmembrane protein 2 homolog (265 aa).

Positions 1–32 (MLIPRLDEVRRALTAFHFFNTLLALAFPVIRS) are cleaved as a signal peptide. The Extracellular segment spans residues 33 to 96 (TSLCDYVFAV…KIAGMFLFIR (64 aa)). Residues 97-117 (ADILPGIIYILACLIVTVLFP) form a helical membrane-spanning segment. Residues 118–265 (EPVYNGPEQV…KKGAKAKKED (148 aa)) are Cytoplasmic-facing. Residues 126 to 230 (QVTYFQGEQL…RPLVNDSRRA (105 aa)) enclose the Thioredoxin domain. Positions 262-265 (KKED) match the Di-lysine motif motif.

It is found in the membrane. The chain is Thioredoxin-related transmembrane protein 2 homolog from Caenorhabditis elegans.